A 164-amino-acid chain; its full sequence is Phosphatidyl-N-methylethanolamine N-methyltransferase (164 aa).

Positions 1–21 (MGLLAAIGVLLPFPFYWWLWT) form an intramembrane region, helical. Topologically, residues 22–30 (NAQSWVNLC) are lumenal. A helical membrane pass occupies residues 31-52 (GRERDPSTVMARVSHVLKAAQL). Residues 53–69 (LSLFSVASLSWPPPLYF) are Cytoplasmic-facing. A helical transmembrane segment spans residues 70-90 (WPLMAFGQFLNFRVYQLLGEA). Position 74–76 (74–76 (AFG)) interacts with S-adenosyl-L-methionine. The Lumenal portion of the chain corresponds to 91–131 (GTYYGVRFGKNIPWVTEFPFGVIRDPQYVGSIMSLLACLSW). Residues 132-151 (VPFQYILLWSLGYVFMMFLE) traverse the membrane as a helical segment. At 152–164 (SKEDPNARAKSIS) the chain is on the cytoplasmic side. 154-155 (ED) serves as a coordination point for S-adenosyl-L-methionine.

This sequence belongs to the class VI-like SAM-binding methyltransferase superfamily. PEMT/PEM2 methyltransferase family.

Its subcellular location is the endoplasmic reticulum membrane. The enzyme catalyses a 1,2-diacyl-sn-glycero-3-phospho-N-methylethanolamine + S-adenosyl-L-methionine = a 1,2-diacyl-sn-glycero-3-phospho-N,N-dimethylethanolamine + S-adenosyl-L-homocysteine + H(+). The catalysed reaction is a 1,2-diacyl-sn-glycero-3-phospho-N,N-dimethylethanolamine + S-adenosyl-L-methionine = a 1,2-diacyl-sn-glycero-3-phosphocholine + S-adenosyl-L-homocysteine + H(+). Its pathway is phospholipid metabolism; phosphatidylcholine biosynthesis. Catalyzes the second two steps of the methylation pathway of phosphatidylcholine biosynthesis, the SAM-dependent methylation of phosphatidylmonomethylethanolamine (PMME) to phosphatidyldimethylethanolamine (PDME) and of PDME to phosphatidylcholine (PC). In Arabidopsis thaliana (Mouse-ear cress), this protein is Phosphatidyl-N-methylethanolamine N-methyltransferase (PLMT).